The sequence spans 333 residues: Protein pelota homolog (333 aa).

Belongs to the eukaryotic release factor 1 family. Pelota subfamily. In terms of assembly, monomer. It depends on a divalent metal cation as a cofactor.

It is found in the cytoplasm. May function in recognizing stalled ribosomes, interact with stem-loop structures in stalled mRNA molecules, and effect endonucleolytic cleavage of the mRNA. May play a role in the release non-functional ribosomes and degradation of damaged mRNAs. Has endoribonuclease activity. The protein is Protein pelota homolog of Pyrobaculum arsenaticum (strain DSM 13514 / JCM 11321 / PZ6).